The sequence spans 743 residues: Photosystem I P700 chlorophyll a apoprotein A2 (743 aa).

The next 8 membrane-spanning stretches (helical) occupy residues 46-69 (IFAT…FHVA), 135-158 (LYMG…LHLQ), 175-199 (LNHH…HVAI), 273-291 (MAHH…GHMY), 336-359 (LHFQ…QHMY), 375-401 (AALY…IFWV), 423-445 (AIIS…LYVH), and 526-544 (FLVH…LILV). The [4Fe-4S] cluster site is built by C568 and C577. A run of 2 helical transmembrane segments spans residues 584–605 (AFYL…YWHW) and 652–674 (LSVW…MFLI). The chlorophyll a site is built by H663, M671, and Y679. W680 contributes to the phylloquinone binding site. A helical membrane pass occupies residues 716 to 736 (LVGLTHFTVGYVLTYAAFLIA).

Belongs to the PsaA/PsaB family. The PsaA/B heterodimer binds the P700 chlorophyll special pair and subsequent electron acceptors. PSI consists of a core antenna complex that captures photons, and an electron transfer chain that converts photonic excitation into a charge separation. The cyanobacterial PSI reaction center is composed of one copy each of PsaA,B,C,D,E,F,I,J,K,L,M and X, and forms trimeric complexes. PSI electron transfer chain: 5 chlorophyll a, 1 chlorophyll a', 2 phylloquinones and 3 4Fe-4S clusters. PSI core antenna: 90 chlorophyll a, 22 carotenoids, 3 phospholipids and 1 galactolipid. P700 is a chlorophyll a/chlorophyll a' dimer, A0 is one or more chlorophyll a, A1 is one or both phylloquinones and FX is a shared 4Fe-4S iron-sulfur center. serves as cofactor.

Its subcellular location is the cellular thylakoid membrane. The catalysed reaction is reduced [plastocyanin] + hnu + oxidized [2Fe-2S]-[ferredoxin] = oxidized [plastocyanin] + reduced [2Fe-2S]-[ferredoxin]. PsaA and PsaB bind P700, the primary electron donor of photosystem I (PSI), as well as the electron acceptors A0, A1 and FX. PSI is a plastocyanin/cytochrome c6-ferredoxin oxidoreductase, converting photonic excitation into a charge separation, which transfers an electron from the donor P700 chlorophyll pair to the spectroscopically characterized acceptors A0, A1, FX, FA and FB in turn. Oxidized P700 is reduced on the lumenal side of the thylakoid membrane by plastocyanin or cytochrome c6. The sequence is that of Photosystem I P700 chlorophyll a apoprotein A2 from Mastigocladus laminosus (Fischerella sp.).